The chain runs to 70 residues: DNA-directed RNA polymerase subunit epsilon (70 aa).

The protein belongs to the RNA polymerase subunit epsilon family. In terms of assembly, RNAP is composed of a core of 2 alpha, a beta and a beta' subunit. The core is associated with a delta subunit, and at least one of epsilon or omega. When a sigma factor is associated with the core the holoenzyme is formed, which can initiate transcription.

It catalyses the reaction RNA(n) + a ribonucleoside 5'-triphosphate = RNA(n+1) + diphosphate. Its function is as follows. A non-essential component of RNA polymerase (RNAP). The sequence is that of DNA-directed RNA polymerase subunit epsilon from Bacillus cereus (strain Q1).